The chain runs to 382 residues: p21-activated protein kinase-interacting protein 1 (382 aa).

WD repeat units lie at residues 37–77 (THHS…EHGA), 80–120 (HHAG…KTFK), 122–160 (HRGHVTFLSIHPSGKLALSVGTDKTLRTWNLIEGRSAFI), 202–240 (TNGKRISSVTFLSDSVLAVAGDEEVVRIFDCDSLECLCE), and 243–284 (AHEN…KVPP). Residues 313–382 (LPPAAEPCPD…MSEKKRKKKM (70 aa)) are disordered. Over residues 352–363 (DSKQPTKGNSPV) the composition is skewed to polar residues. Positions 365-382 (AKKRKMATMSEKKRKKKM) are enriched in basic residues.

In terms of assembly, interacts with PAK1.

Its subcellular location is the nucleus. It is found in the nucleolus. Its function is as follows. Negatively regulates the PAK1 kinase. PAK1 is a member of the PAK kinase family, which has been shown to play a positive role in the regulation of signaling pathways involving MAPK8 and RELA. PAK1 exists as an inactive homodimer, which is activated by binding of small GTPases such as CDC42 to an N-terminal regulatory domain. PAK1IP1 also binds to the N-terminus of PAK1, and inhibits the specific activation of PAK1 by CDC42. May be involved in ribosomal large subunit assembly. The chain is p21-activated protein kinase-interacting protein 1 (Pak1ip1) from Mus musculus (Mouse).